Consider the following 462-residue polypeptide: Kinetochore protein nsk1 (462 aa).

Residues 104–120 (PSKNHETSLSPSKSTID) show a composition bias toward polar residues. Disordered stretches follow at residues 104–161 (PSKN…CPGI), 180–240 (EKYG…PLRT), and 320–462 (NQLF…NIQS). A compositionally biased stretch (basic and acidic residues) spans 121 to 138 (NNERKLDNEIDNYKHDVK). Residues 146 to 156 (GKTSNPSQGTT) are compositionally biased toward polar residues. Residues 180-189 (EKYGKTDLGK) are compositionally biased toward basic and acidic residues. Polar residues predominate over residues 229–240 (KNRSSTFSPLRT). Positions 324–333 (KSEEEKDPVG) are enriched in basic and acidic residues. Over residues 422–444 (WPQNLAKNNINSEPNTPTKSNID) the composition is skewed to polar residues. Over residues 449-462 (HSARAHKTRKNIQS) the composition is skewed to basic residues.

In terms of assembly, interacts with dlc1. The dlc1-nsk1 complex seems to oligomerize in chain-like structures. Also binds directly to spindle microtubules. In terms of processing, phosphorylated by cdk1 at prometaphase arrest. Phosphorylation prevents nsk1 kinetochore and spindle targeting. Dephosphorylated by clp1 at anaphase onset controls its relocalization.

Its subcellular location is the nucleus. The protein resides in the nucleolus. The protein localises to the cytoplasm. It localises to the cytoskeleton. It is found in the spindle. Its subcellular location is the chromosome. The protein resides in the centromere. The protein localises to the kinetochore. Its function is as follows. Ensures chromosome alignment and accurate chromosome segregation during mitosis. Promotes proper kinetochore-microtubule (k-MT) interactions during anaphase B. The phosphorylation status of nsk1 affects the proper k-MT coupling, ensuring that it interacts stably only at the correct time during mitosis. The sequence is that of Kinetochore protein nsk1 (nsk1) from Schizosaccharomyces pombe (strain 972 / ATCC 24843) (Fission yeast).